The sequence spans 520 residues: Cytochrome P450 6d3 (520 aa).

Heme is bound at residue Cys461.

Belongs to the cytochrome P450 family. The cofactor is heme.

It is found in the endoplasmic reticulum membrane. Its subcellular location is the microsome membrane. Its function is as follows. Metabolizes pyrethroid insecticides and other xenobiotics. The sequence is that of Cytochrome P450 6d3 (CYP6D3) from Musca domestica (House fly).